A 135-amino-acid chain; its full sequence is Large ribosomal subunit protein uL22c (135 aa).

This sequence belongs to the universal ribosomal protein uL22 family. Part of the 50S ribosomal subunit.

It is found in the plastid. Its function is as follows. This protein binds specifically to 23S rRNA. The globular domain of the protein is located near the polypeptide exit tunnel on the outside of the subunit, while an extended beta-hairpin is found that lines the wall of the exit tunnel in the center of the 70S ribosome. This chain is Large ribosomal subunit protein uL22c (rpl22), found in Cuscuta reflexa (Southern Asian dodder).